Here is a 217-residue protein sequence, read N- to C-terminus: uncharacterized protein (217 aa).

This sequence belongs to the IIV-6 309L family.

This is an uncharacterized protein from Acheta domesticus (House cricket).